The primary structure comprises 270 residues: Putative pyruvate, phosphate dikinase regulatory protein (270 aa).

148 to 155 (GISRTSKT) is a binding site for ADP.

It belongs to the pyruvate, phosphate/water dikinase regulatory protein family. PDRP subfamily.

The catalysed reaction is N(tele)-phospho-L-histidyl/L-threonyl-[pyruvate, phosphate dikinase] + ADP = N(tele)-phospho-L-histidyl/O-phospho-L-threonyl-[pyruvate, phosphate dikinase] + AMP + H(+). It catalyses the reaction N(tele)-phospho-L-histidyl/O-phospho-L-threonyl-[pyruvate, phosphate dikinase] + phosphate + H(+) = N(tele)-phospho-L-histidyl/L-threonyl-[pyruvate, phosphate dikinase] + diphosphate. Functionally, bifunctional serine/threonine kinase and phosphorylase involved in the regulation of the pyruvate, phosphate dikinase (PPDK) by catalyzing its phosphorylation/dephosphorylation. The chain is Putative pyruvate, phosphate dikinase regulatory protein from Bacillus cereus (strain 03BB102).